Reading from the N-terminus, the 120-residue chain is Glycine cleavage system H protein (120 aa).

Residues 17-99 (VATVGITTYA…QGAGWFFKLK (83 aa)) enclose the Lipoyl-binding domain. Residue K58 is modified to N6-lipoyllysine.

Belongs to the GcvH family. The glycine cleavage system is composed of four proteins: P, T, L and H. (R)-lipoate is required as a cofactor.

The glycine cleavage system catalyzes the degradation of glycine. The H protein shuttles the methylamine group of glycine from the P protein to the T protein. This Rhizobium etli (strain CIAT 652) protein is Glycine cleavage system H protein.